Consider the following 598-residue polypeptide: DNA (cytosine-5)-methyltransferase DRM2 (598 aa).

Disordered regions lie at residues 1–49 (MVDW…NGKA) and 114–146 (EVDE…GDED). Residues 42 to 91 (PQDANGKANGSGALVAEFMGMGFPKEMILKAIKEIGDTDTEQLLELLLTY) enclose the UBA 1 domain. Residues 114–128 (EVDEEEDDTNWDEYD) are compositionally biased toward acidic residues. The region spanning 150–194 (EMSEKDEKMKSLVNMGFPEDEAKMAIDRCGLDAPVAVLVDSIYAS) is the UBA 2 domain. A disordered region spans residues 227-252 (GSKKRKRYGSGPSGNQVPFDGSHEEP). The 327-residue stretch at 272 to 598 (VHRNLPDQAL…EHVKATMSAV (327 aa)) folds into the SAM-dependent MTase DRM-type domain.

The protein belongs to the class I-like SAM-binding methyltransferase superfamily. DRM-methyltransferase family. As to quaternary structure, interacts (via UBA domains) with EIF4A.

It is found in the nucleus. It carries out the reaction a 2'-deoxycytidine in DNA + S-adenosyl-L-methionine = a 5-methyl-2'-deoxycytidine in DNA + S-adenosyl-L-homocysteine + H(+). Involved in de novo DNA methylation. Required for CpG and non-CpG methylation. Required for normal establishment and maintenance of RNA-directed DNA methylation (RdDM) mediated by small interfering RNAs (siRNAs). Regulates proper plant development in both vegetative and reproductive stages through DNA methylation. The sequence is that of DNA (cytosine-5)-methyltransferase DRM2 from Oryza sativa subsp. japonica (Rice).